The chain runs to 118 residues: Ribonuclease P protein component (118 aa).

Belongs to the RnpA family. As to quaternary structure, consists of a catalytic RNA component (M1 or rnpB) and a protein subunit.

It carries out the reaction Endonucleolytic cleavage of RNA, removing 5'-extranucleotides from tRNA precursor.. Its function is as follows. RNaseP catalyzes the removal of the 5'-leader sequence from pre-tRNA to produce the mature 5'-terminus. It can also cleave other RNA substrates such as 4.5S RNA. The protein component plays an auxiliary but essential role in vivo by binding to the 5'-leader sequence and broadening the substrate specificity of the ribozyme. The protein is Ribonuclease P protein component of Ureaplasma urealyticum serovar 10 (strain ATCC 33699 / Western).